Reading from the N-terminus, the 365-residue chain is 3-dehydroquinate synthase (365 aa).

Residues 75–80 (DAESGK), 109–113 (GAATD), 133–134 (TT), Lys-146, and Lys-155 contribute to the NAD(+) site. Zn(2+) is bound by residues Glu-188, His-253, and His-269.

This sequence belongs to the sugar phosphate cyclases superfamily. Dehydroquinate synthase family. It depends on NAD(+) as a cofactor. The cofactor is Co(2+). Zn(2+) serves as cofactor.

Its subcellular location is the cytoplasm. The enzyme catalyses 7-phospho-2-dehydro-3-deoxy-D-arabino-heptonate = 3-dehydroquinate + phosphate. The protein operates within metabolic intermediate biosynthesis; chorismate biosynthesis; chorismate from D-erythrose 4-phosphate and phosphoenolpyruvate: step 2/7. Functionally, catalyzes the conversion of 3-deoxy-D-arabino-heptulosonate 7-phosphate (DAHP) to dehydroquinate (DHQ). The polypeptide is 3-dehydroquinate synthase (Corynebacterium efficiens (strain DSM 44549 / YS-314 / AJ 12310 / JCM 11189 / NBRC 100395)).